The chain runs to 182 residues: uncharacterized protein (182 aa).

The protein resides in the mitochondrion. This is an uncharacterized protein from Schizosaccharomyces pombe (strain 972 / ATCC 24843) (Fission yeast).